Reading from the N-terminus, the 179-residue chain is Adenine phosphoribosyltransferase (179 aa).

The protein belongs to the purine/pyrimidine phosphoribosyltransferase family. As to quaternary structure, homodimer.

It is found in the cytoplasm. The enzyme catalyses AMP + diphosphate = 5-phospho-alpha-D-ribose 1-diphosphate + adenine. The protein operates within purine metabolism; AMP biosynthesis via salvage pathway; AMP from adenine: step 1/1. Its function is as follows. Catalyzes a salvage reaction resulting in the formation of AMP, that is energically less costly than de novo synthesis. This is Adenine phosphoribosyltransferase from Gluconobacter oxydans (strain 621H) (Gluconobacter suboxydans).